Here is a 712-residue protein sequence, read N- to C-terminus: Eukaryotic translation initiation factor 3 subunit B (712 aa).

M1 carries the post-translational modification N-acetylmethionine. Residues 56-143 (NIIVVDHLPV…HIFAVNMFDD (88 aa)) enclose the RRM domain.

The protein belongs to the eIF-3 subunit B family. Component of the eukaryotic translation initiation factor 3 (eIF-3) complex, which is composed of at least 13 different subunits. Binds to the translation initiation factor TIF3H1.

The protein resides in the cytoplasm. Functionally, RNA-binding component of the eukaryotic translation initiation factor 3 (eIF-3) complex, which is involved in protein synthesis of a specialized repertoire of mRNAs and, together with other initiation factors, stimulates binding of mRNA and methionyl-tRNAi to the 40S ribosome. The eIF-3 complex specifically targets and initiates translation of a subset of mRNAs involved in cell proliferation. The polypeptide is Eukaryotic translation initiation factor 3 subunit B (TIF3B1) (Arabidopsis thaliana (Mouse-ear cress)).